The primary structure comprises 193 residues: Lipopolysaccharide core heptose(II)-phosphate phosphatase (193 aa).

The N-terminal stretch at 1–25 (MKLKKHVAVLLISFLCLIGLVTQHA) is a signal peptide.

The protein belongs to the phosphoglycerate mutase family. Ais subfamily.

Its subcellular location is the periplasm. It functions in the pathway bacterial outer membrane biogenesis; lipopolysaccharide metabolism. Its function is as follows. Catalyzes the dephosphorylation of heptose(II) of the outer membrane lipopolysaccharide core. The chain is Lipopolysaccharide core heptose(II)-phosphate phosphatase from Escherichia fergusonii (strain ATCC 35469 / DSM 13698 / CCUG 18766 / IAM 14443 / JCM 21226 / LMG 7866 / NBRC 102419 / NCTC 12128 / CDC 0568-73).